The chain runs to 163 residues: D-aminoacyl-tRNA deacylase (163 aa).

The short motif at 141 to 142 (GP) is the Gly-cisPro motif, important for rejection of L-amino acids element.

The protein belongs to the DTD family. In terms of assembly, homodimer.

It localises to the cytoplasm. It carries out the reaction glycyl-tRNA(Ala) + H2O = tRNA(Ala) + glycine + H(+). The enzyme catalyses a D-aminoacyl-tRNA + H2O = a tRNA + a D-alpha-amino acid + H(+). An aminoacyl-tRNA editing enzyme that deacylates mischarged D-aminoacyl-tRNAs. Also deacylates mischarged glycyl-tRNA(Ala), protecting cells against glycine mischarging by AlaRS. Acts via tRNA-based rather than protein-based catalysis; rejects L-amino acids rather than detecting D-amino acids in the active site. By recycling D-aminoacyl-tRNA to D-amino acids and free tRNA molecules, this enzyme counteracts the toxicity associated with the formation of D-aminoacyl-tRNA entities in vivo and helps enforce protein L-homochirality. The protein is D-aminoacyl-tRNA deacylase of Neisseria meningitidis serogroup B (strain ATCC BAA-335 / MC58).